A 273-amino-acid chain; its full sequence is N(omega)-hydroxy-L-arginine amidinohydrolase (273 aa).

Asp-109, His-111, Asp-113, Asp-198, and Asp-200 together coordinate Mn(2+).

Belongs to the arginase family. Mn(2+) serves as cofactor.

It carries out the reaction N(omega)-hydroxy-L-arginine + H2O = hydroxyurea + L-ornithine. Its function is as follows. Involved in the biosynthesis of the antibiotic D-cycloserine (DCS), a cyclic structural analog of D-alanine, used as an antitubercular agent. Catalyzes the hydrolysis of N(omega)-hydroxy-L-arginine (NHA) to yield hydroxyurea (HU) and L-ornithine. This chain is N(omega)-hydroxy-L-arginine amidinohydrolase, found in Streptomyces lavendulae.